The primary structure comprises 143 residues: UPF0201 protein Pcal_0593 (143 aa).

Belongs to the UPF0201 family.

The chain is UPF0201 protein Pcal_0593 from Pyrobaculum calidifontis (strain DSM 21063 / JCM 11548 / VA1).